The primary structure comprises 274 residues: Large ribosomal subunit protein uL2c (274 aa).

The segment at 230–252 (HPHGGGEGRSPIGRSKPLTPWGK) is disordered.

This sequence belongs to the universal ribosomal protein uL2 family. In terms of assembly, part of the 50S ribosomal subunit.

It localises to the plastid. The protein is Large ribosomal subunit protein uL2c (rpl2) of Euglena longa (Euglenophycean alga).